The chain runs to 323 residues: MSRPRMRLVVTADDFGYCPRRDEGIVEAFLAGAVTSVSLLVNGAATESAAELARRHSIPTGLHANLSEGRPVGPARRGASSLLGPEGFFLGKMGFREAVAAGDVDLPQVREELEAQLSCFRELLGRAPTHADGHQHVHVLPGVCQVFAEALQAYGVRFTRLPLERGVGGCTWLEAPARAFACAVERDARAAVGPFSRHGLRWTDAFVGLSTCGRHMSAHRVSGALARVLEGTLAGHTLTAELMAHPGYPSVPPTGGCGEGPDAFSCSWERLHELRVLTAPTLRAQLAQDGVQLCALDDLDSKRPGEEVPCEPTLEPFLEPSLL.

Aspartate 13 (proton acceptor) is an active-site residue. 2 residues coordinate Mg(2+): aspartate 14 and histidine 134.

This sequence belongs to the YdjC deacetylase family. The cofactor is Mg(2+).

Its function is as follows. Probably catalyzes the deacetylation of acetylated carbohydrates an important step in the degradation of oligosaccharides. The chain is Carbohydrate deacetylase (YDJC) from Homo sapiens (Human).